The chain runs to 302 residues: Putative peptide permease protein BOV_A0350 (302 aa).

The disordered stretch occupies residues 1 to 22; that stretch reads MRSSIHASRLRKMGQSIPASTG. 6 helical membrane-spanning segments follow: residues 38–58, 101–121, 147–167, 200–222, 230–250, and 268–288; these read IFGLVLLTPLLFAVLTYPLWL, LLVAVSSVVLSTAIGFLIGAI, IFLLVLASIIGSGIWSTVVVI, AGLGHLLFRHGLPNSIDILVVYA, ILLEAGLSFLGLGVPPPAASW, and WQWLFPGGALVLAVLAINFIG. The region spanning 97–288 is the ABC transmembrane type-1 domain; the sequence is GRISLLVAVS…LAVLAINFIG (192 aa).

The protein belongs to the binding-protein-dependent transport system permease family. The complex is composed of two ATP-binding proteins (BOV_A0347 and BOV_A0348), two transmembrane proteins (BOV_A0350 and BOV_A0351) and a solute-binding protein (BOV_A0352).

Its subcellular location is the cell inner membrane. Its function is as follows. Probably part of an ABC transporter complex that could be involved in peptide import. Probably responsible for the translocation of the substrate across the membrane. The protein is Putative peptide permease protein BOV_A0350 of Brucella ovis (strain ATCC 25840 / 63/290 / NCTC 10512).